The sequence spans 717 residues: uncharacterized protein (717 aa).

It belongs to the asfivirus C717R family.

The protein localises to the virion. This is an uncharacterized protein from African swine fever virus (strain Badajoz 1971 Vero-adapted) (Ba71V).